Consider the following 388-residue polypeptide: bZIP transcription factor ABI5 homolog (388 aa).

Positions 1–36 are disordered; that stretch reads MASEMSKNVKVTDDQEVTSQERDQSGGTKVGGEEEI. S44 carries the phosphoserine modification. Positions 302–365 constitute a bZIP domain; it reads VERRQRRMIK…KQMLVEKMME (64 aa). The tract at residues 304 to 323 is basic motif; that stretch reads RRQRRMIKNRESAARSRARK. A leucine-zipper region spans residues 330 to 344; that stretch reads LEAELNYLKQENARL. The interval 368 to 388 is disordered; sequence KEKMNANRGGSQLRRSGSCMW.

Belongs to the bZIP family. ABI5 subfamily. Forms homodimers. Interacts with VP1. Interacts with GF14D. Interacts with PP2C51. Interacts with SAPK2. Post-translationally, phosphorylated at Ser-44 by SAPK6. In terms of tissue distribution, expressed in roots, leaves and panicles. Expressed in seeds.

The protein resides in the nucleus. Functionally, transcription factor that possesses transactivation activity in yeast. Involved in abscisic acid (ABA) signaling pathway. Binds to the G-box motif 5'-CACGTG-3' of TRAB1 gene promoter. Involved in the regulation of pollen maturation. May act as negative regulator of salt stress response. Together with PYL5, PP2C30 and SAPK2, is part of an ABA signaling unit that modulates seed germination and early seedling growth. This is bZIP transcription factor ABI5 homolog from Oryza sativa subsp. japonica (Rice).